The following is a 426-amino-acid chain: Serine--tRNA ligase (426 aa).

233 to 235 provides a ligand contact to L-serine; the sequence is TAE. 264–266 lines the ATP pocket; sequence RSE. Glu-287 lines the L-serine pocket. 351-354 contacts ATP; sequence EISS. Ser-387 provides a ligand contact to L-serine.

It belongs to the class-II aminoacyl-tRNA synthetase family. Type-1 seryl-tRNA synthetase subfamily. Homodimer. The tRNA molecule binds across the dimer.

The protein resides in the cytoplasm. It carries out the reaction tRNA(Ser) + L-serine + ATP = L-seryl-tRNA(Ser) + AMP + diphosphate + H(+). The catalysed reaction is tRNA(Sec) + L-serine + ATP = L-seryl-tRNA(Sec) + AMP + diphosphate + H(+). It functions in the pathway aminoacyl-tRNA biosynthesis; selenocysteinyl-tRNA(Sec) biosynthesis; L-seryl-tRNA(Sec) from L-serine and tRNA(Sec): step 1/1. Its function is as follows. Catalyzes the attachment of serine to tRNA(Ser). Is also able to aminoacylate tRNA(Sec) with serine, to form the misacylated tRNA L-seryl-tRNA(Sec), which will be further converted into selenocysteinyl-tRNA(Sec). The sequence is that of Serine--tRNA ligase from Pseudomonas putida (strain ATCC 47054 / DSM 6125 / CFBP 8728 / NCIMB 11950 / KT2440).